We begin with the raw amino-acid sequence, 174 residues long: RNA pyrophosphohydrolase (174 aa).

The 144-residue stretch at 6–149 (GYRPNVGIIL…KRDVYERALS (144 aa)) folds into the Nudix hydrolase domain. The short motif at 38 to 59 (GGIKPGESPEAAMYRELLEEVG) is the Nudix box element.

It belongs to the Nudix hydrolase family. RppH subfamily. A divalent metal cation is required as a cofactor.

Functionally, accelerates the degradation of transcripts by removing pyrophosphate from the 5'-end of triphosphorylated RNA, leading to a more labile monophosphorylated state that can stimulate subsequent ribonuclease cleavage. This Chromobacterium violaceum (strain ATCC 12472 / DSM 30191 / JCM 1249 / CCUG 213 / NBRC 12614 / NCIMB 9131 / NCTC 9757 / MK) protein is RNA pyrophosphohydrolase.